Consider the following 308-residue polypeptide: Transaldolase (308 aa).

Catalysis depends on K125, which acts as the Schiff-base intermediate with substrate.

It belongs to the transaldolase family. Type 1 subfamily. In terms of assembly, homodimer.

It localises to the cytoplasm. The catalysed reaction is D-sedoheptulose 7-phosphate + D-glyceraldehyde 3-phosphate = D-erythrose 4-phosphate + beta-D-fructose 6-phosphate. It functions in the pathway carbohydrate degradation; pentose phosphate pathway; D-glyceraldehyde 3-phosphate and beta-D-fructose 6-phosphate from D-ribose 5-phosphate and D-xylulose 5-phosphate (non-oxidative stage): step 2/3. In terms of biological role, transaldolase is important for the balance of metabolites in the pentose-phosphate pathway. The chain is Transaldolase from Pseudomonas entomophila (strain L48).